The primary structure comprises 637 residues: Biosynthetic arginine decarboxylase (637 aa).

Residue Lys-101 is modified to N6-(pyridoxal phosphate)lysine. A substrate-binding site is contributed by 286 to 296 (FDVGGGLAVDY).

This sequence belongs to the Orn/Lys/Arg decarboxylase class-II family. SpeA subfamily. Mg(2+) serves as cofactor. It depends on pyridoxal 5'-phosphate as a cofactor.

It catalyses the reaction L-arginine + H(+) = agmatine + CO2. It participates in amine and polyamine biosynthesis; agmatine biosynthesis; agmatine from L-arginine: step 1/1. Its function is as follows. Catalyzes the biosynthesis of agmatine from arginine. This Shewanella baltica (strain OS223) protein is Biosynthetic arginine decarboxylase.